A 115-amino-acid chain; its full sequence is Cell division topological specificity factor (115 aa).

The disordered stretch occupies residues 89-115 (TGQIQLKEPKNQSEVDSPETEGKDQNS).

Belongs to the MinE family.

In terms of biological role, prevents the cell division inhibition by proteins MinC and MinD at internal division sites while permitting inhibition at polar sites. This ensures cell division at the proper site by restricting the formation of a division septum at the midpoint of the long axis of the cell. This chain is Cell division topological specificity factor, found in Prochlorococcus marinus (strain NATL2A).